Reading from the N-terminus, the 188-residue chain is Elongation factor P (188 aa).

Position 34 is an N6-(3,6-diaminohexanoyl)-5-hydroxylysine (Lys-34).

Belongs to the elongation factor P family. May be beta-lysylated on the epsilon-amino group of Lys-34 by the combined action of EpmA and EpmB, and then hydroxylated on the C5 position of the same residue by EpmC (if this protein is present). Lysylation is critical for the stimulatory effect of EF-P on peptide-bond formation. The lysylation moiety may extend toward the peptidyltransferase center and stabilize the terminal 3-CCA end of the tRNA. Hydroxylation of the C5 position on Lys-34 may allow additional potential stabilizing hydrogen-bond interactions with the P-tRNA.

It localises to the cytoplasm. It participates in protein biosynthesis; polypeptide chain elongation. In terms of biological role, involved in peptide bond synthesis. Alleviates ribosome stalling that occurs when 3 or more consecutive Pro residues or the sequence PPG is present in a protein, possibly by augmenting the peptidyl transferase activity of the ribosome. Modification of Lys-34 is required for alleviation. The polypeptide is Elongation factor P (Citrobacter koseri (strain ATCC BAA-895 / CDC 4225-83 / SGSC4696)).